A 356-amino-acid chain; its full sequence is Peptide chain release factor 1 (356 aa).

Gln233 is subject to N5-methylglutamine.

The protein belongs to the prokaryotic/mitochondrial release factor family. In terms of processing, methylated by PrmC. Methylation increases the termination efficiency of RF1.

The protein resides in the cytoplasm. In terms of biological role, peptide chain release factor 1 directs the termination of translation in response to the peptide chain termination codons UAG and UAA. The sequence is that of Peptide chain release factor 1 from Bacillus licheniformis (strain ATCC 14580 / DSM 13 / JCM 2505 / CCUG 7422 / NBRC 12200 / NCIMB 9375 / NCTC 10341 / NRRL NRS-1264 / Gibson 46).